The chain runs to 229 residues: NAD(P)H-hydrate epimerase (229 aa).

One can recognise a YjeF N-terminal domain in the interval 10 to 217; the sequence is AINVDLELFN…ALQRKYELNL (208 aa). Position 60 to 64 (60 to 64) interacts with (6S)-NADPHX; it reads NNGGD. The K(+) site is built by asparagine 61 and aspartate 125. (6S)-NADPHX-binding positions include 129–135 and aspartate 158; that span reads GFSFKPP. Serine 161 is a K(+) binding site.

The protein belongs to the NnrE/AIBP family. The cofactor is K(+).

It carries out the reaction (6R)-NADHX = (6S)-NADHX. The enzyme catalyses (6R)-NADPHX = (6S)-NADPHX. Its function is as follows. Catalyzes the epimerization of the S- and R-forms of NAD(P)HX, a damaged form of NAD(P)H that is a result of enzymatic or heat-dependent hydration. This is a prerequisite for the S-specific NAD(P)H-hydrate dehydratase to allow the repair of both epimers of NAD(P)HX. The polypeptide is NAD(P)H-hydrate epimerase (Drosophila mojavensis (Fruit fly)).